Consider the following 231-residue polypeptide: ATP phosphoribosyltransferase (231 aa).

The protein belongs to the ATP phosphoribosyltransferase family. Short subfamily. In terms of assembly, heteromultimer composed of HisG and HisZ subunits.

The protein resides in the cytoplasm. The enzyme catalyses 1-(5-phospho-beta-D-ribosyl)-ATP + diphosphate = 5-phospho-alpha-D-ribose 1-diphosphate + ATP. It functions in the pathway amino-acid biosynthesis; L-histidine biosynthesis; L-histidine from 5-phospho-alpha-D-ribose 1-diphosphate: step 1/9. Functionally, catalyzes the condensation of ATP and 5-phosphoribose 1-diphosphate to form N'-(5'-phosphoribosyl)-ATP (PR-ATP). Has a crucial role in the pathway because the rate of histidine biosynthesis seems to be controlled primarily by regulation of HisG enzymatic activity. This chain is ATP phosphoribosyltransferase, found in Sinorhizobium medicae (strain WSM419) (Ensifer medicae).